The primary structure comprises 361 residues: 3,6-anhydro-alpha-L-galactonate cycloisomerase (361 aa).

Catalysis depends on lysine 166, which acts as the Proton acceptor. Positions 195, 221, and 247 each coordinate Mg(2+). Residue histidine 297 is the Proton donor/acceptor of the active site.

It belongs to the mandelate racemase/muconate lactonizing enzyme family. Mg(2+) is required as a cofactor.

The catalysed reaction is 3,6-anhydro-L-galactonate = 2-dehydro-3-deoxy-L-galactonate. Involved in the degradation of 3,6-anhydro-L-galactose, which is the major monomeric sugar of red macroalgae. Catalyzes the isomerization of 3,6-anhydrogalactonate (AHGA) to 2-keto-3-deoxy-galactonate (KDGal). This Streptomyces coelicolor (strain ATCC BAA-471 / A3(2) / M145) protein is 3,6-anhydro-alpha-L-galactonate cycloisomerase.